The sequence spans 1473 residues: MKRFFIVILFILLVCIFNVKSEEQLGEIEISKNSFSIDTNAINAEINYVIDNSITKPKLIVTLLSGDVNSIEDITSISKDKSTLTFGDFSSLSLGNKQSNNNNRIVLMIATITGSLLFIRFNIGFNKSTTLIILIIGTIFLIGSSHSITLSEVSIRIDIKVPSTFKFEKLDLKLGSGSSNIIGLSSNSINIDSCLNLKDHKINLSDTTITSALNICSTKNIDIKNLKQSSNSLINLKTNSNITLNFGNGYSGLLDIYSNSLKIDEACDIKVDGLNTTGSCNEGTSSKLVINANGVTITGTTPTTTPTTTPTTTPTTTPTTTPTTTPTTTPTTTPTTTPTTTPTTTPTTTPTTTPTTTPTITPTTTPTTTPTTTPTDSCPTTSTWRPTMASSSSPSSPSFSSVTPILDFNFDKSNLGFRSRYKFNEKSISDGPNGIANSFSINFNETYSPDSNWLISKIPSPALRANVNYVFSFNFKLGQALSSDNTISSVTISFYSPIDLPDPNVLEYFDQPTASPLFTKTITTGSFSSSTTFQANSISIKPTTDIGLSLIAIQIIRTKQNSIPINLYFSEMKLSIPSKSIIDPTTFLTKDSELINIPKASASFDSQDPSTCPYLATDLVHWHDKSIWSSGIVPLPNASSNIILPAGKRVLISPCSISQTDIYKKITIPPTSELIFSDVNMTMHVQDIYVQGKFTMGTKECRYNAYINLIFHGTKTTSDTIATNFGSKGIAVASGGFISVQGKQYHNTWSKLSTTAWSGDSTIYIQDSVNWEVGQQVLITTSVYKDELYNQNEVLTIAAISGKKIQFTSALKYYHYGGQEYQAEVGLLSRRIVFQGDQSSSDPQQFGGHVLVSGEGQFSGLSLVRFGQKNIKGRYPLHYHLANNVQKSYISDCSVIDSYYRCYTIHGTNGVTLTRNVAFNAIGHCYYLEDGVEVDNTISYNLGAFVHTIGTPAAGYNQYGQDFLQSSDLTQPADSAAACYYITNAANSFIGNAASGGWSGFAFPNLPRPIGNHLSVSIVPSQFIAKVWEGNTAHSSGYYFEFGASIYVGGLLTYNDATGLLQYSSGRESRDTYLTGYNTSAAVWMRFNNTKVYLSNRGLSMWGERTEAVNLESHDSRRPASLFGEAWLSNAIVNGQSGNILSASVEYTRQGFQFYDTYVQTIISNIIFRNFIKYQNASSNEEDNRVIISMTHSSEFLPQGISVSKNITIQNTATSQFIGHNIPVNSTGSSRFFNFIDWDGSLTGKNVPTLIGSHEKFWQFDNTCSFNSDWNCYVCTKGTREIANVQFWVPGLISRDDAQNNDDSIGSISLFGDGITDRRSTRVIHTAGITGVSNSGWYLYLTDGTPTYMKIWLAQVIYNNYLFIAIPYPATTTFSVSSEYKYNSNYNFNFTQTSSASAVRSGDGKKYYFDGTHLFIKVINFRLNGTESFDRGGAKVYDVYWEFLIHITASNTIKPPVNGFFKGLTDTLPSSNL.

The signal sequence occupies residues 1–21 (MKRFFIVILFILLVCIFNVKS). A helical membrane pass occupies residues 105-125 (IVLMIATITGSLLFIRFNIGF). Asn126 carries N-linked (GlcNAc...) asparagine glycosylation. A helical membrane pass occupies residues 130–150 (TLIILIIGTIFLIGSSHSITL). N-linked (GlcNAc...) asparagine glycosylation is found at Asn203, Asn241, and Asn275. Low complexity predominate over residues 298-375 (TGTTPTTTPT…PTTTPTTTPT (78 aa)). A disordered region spans residues 298–400 (TGTTPTTTPT…SSSPSSPSFS (103 aa)). A compositionally biased stretch (polar residues) spans 376-389 (DSCPTTSTWRPTMA). The span at 390–400 (SSSSPSSPSFS) shows a compositional bias: low complexity. 10 N-linked (GlcNAc...) asparagine glycosylation sites follow: Asn444, Asn637, Asn680, Asn1078, Asn1088, Asn1176, Asn1206, Asn1225, Asn1389, and Asn1424. Positions 626-754 (SIWSSGIVPL…YHNTWSKLST (129 aa)) constitute a G8 domain.

The protein belongs to the comF family.

It localises to the membrane. In Dictyostelium discoideum (Social amoeba), this protein is G8 domain-containing protein DDB_G0286311.